The chain runs to 564 residues: Forkhead transcription factor HCM1 (564 aa).

Positions 33 to 80 (DEKEMITPPSSTVRKTMKEVNKRPSHPLSPDHSSPIAPSKAKRQRSDT) are disordered. Residues 58–67 (HPLSPDHSSP) show a composition bias toward low complexity. Positions 108-199 (KKPPYSYATL…KFFKGENRGY (92 aa)) form a DNA-binding region, fork-head. The span at 224–241 (QVESGEGNDDLPDEEERE) shows a compositional bias: acidic residues. The interval 224-246 (QVESGEGNDDLPDEEEREEAGKF) is disordered. Thr342 bears the Phosphothreonine mark. The interval 401-448 (SKPQSQQSYSNSQLPPPPSSHGSDLLKTPKMRHSDGLEKTPSRLISTP) is disordered. The segment covering 402–413 (KPQSQQSYSNSQ) has biased composition (polar residues). The segment covering 432–441 (RHSDGLEKTP) has biased composition (basic and acidic residues). Residue Ser496 is modified to Phosphoserine. Residues 536 to 564 (SDGNNTTDSNQKHHPYHNHPSNDSGNEKN) are disordered. Positions 554–564 (HPSNDSGNEKN) are enriched in polar residues.

In terms of processing, phosphorylated by CDK1.

The protein localises to the cytoplasm. Its subcellular location is the nucleus. Transcription factor regulating the cell cycle specific transcription of a spindle pole body (SPB) calmodulin binding protein SPC110. Required for full induction of SPC110 transcription in late G1. Binds to DNA consensus sequence 5'-[AT]AA[TC]AAACAA[AT]-3'. Dosage dependent suppressor of calmodulin mutants which have specific defects in SPB assembly. This chain is Forkhead transcription factor HCM1 (HCM1), found in Saccharomyces cerevisiae (strain ATCC 204508 / S288c) (Baker's yeast).